The primary structure comprises 292 residues: Tyrosine isonitrile desaturase (292 aa).

Residues His110, Asp112, and His259 each contribute to the Fe cation site.

This sequence belongs to the TfdA dioxygenase family. The cofactor is Fe(2+).

It catalyses the reaction (2S)-3-(4-hydroxyphenyl)-2-isocyanopropanoate + 2-oxoglutarate + O2 = (2E)-3-(4-hydroxyphenyl)-2-isocyanoprop-2-enoate + succinate + CO2 + H2O. Functionally, catalyzes the 2-oxoglutarate-dependent oxidation of tyrosine isonitrile. This chain is Tyrosine isonitrile desaturase, found in Erwinia amylovora (strain CFBP1430).